The following is a 188-amino-acid chain: GTP cyclohydrolase 1 (188 aa).

Positions 78, 81, and 150 each coordinate Zn(2+).

Belongs to the GTP cyclohydrolase I family. Homomer.

It catalyses the reaction GTP + H2O = 7,8-dihydroneopterin 3'-triphosphate + formate + H(+). The protein operates within cofactor biosynthesis; 7,8-dihydroneopterin triphosphate biosynthesis; 7,8-dihydroneopterin triphosphate from GTP: step 1/1. In Geobacillus sp. (strain WCH70), this protein is GTP cyclohydrolase 1.